Consider the following 353-residue polypeptide: UPF0324 membrane protein PP_3661 (353 aa).

A run of 8 helical transmembrane segments spans residues 20–42 (LNGI…MPAI), 70–92 (ASWA…AFFG), 105–127 (WSGL…WCGM), 137–159 (ALLT…ESAL), 166–188 (SAMA…PLAI), 234–253 (MTRV…WISR), 266–288 (IAMP…QVLP), and 326–348 (ALAT…TLGV).

This sequence belongs to the UPF0324 family.

The protein localises to the cell membrane. The protein is UPF0324 membrane protein PP_3661 of Pseudomonas putida (strain ATCC 47054 / DSM 6125 / CFBP 8728 / NCIMB 11950 / KT2440).